The primary structure comprises 379 residues: Lipid-A-disaccharide synthase (379 aa).

The protein belongs to the LpxB family.

It catalyses the reaction a lipid X + a UDP-2-N,3-O-bis[(3R)-3-hydroxyacyl]-alpha-D-glucosamine = a lipid A disaccharide + UDP + H(+). It participates in bacterial outer membrane biogenesis; LPS lipid A biosynthesis. Its function is as follows. Condensation of UDP-2,3-diacylglucosamine and 2,3-diacylglucosamine-1-phosphate to form lipid A disaccharide, a precursor of lipid A, a phosphorylated glycolipid that anchors the lipopolysaccharide to the outer membrane of the cell. This Persephonella marina (strain DSM 14350 / EX-H1) protein is Lipid-A-disaccharide synthase.